The following is a 475-amino-acid chain: Argininosuccinate lyase 1 (475 aa).

The protein belongs to the lyase 1 family. Argininosuccinate lyase subfamily.

It localises to the cytoplasm. The catalysed reaction is 2-(N(omega)-L-arginino)succinate = fumarate + L-arginine. Its pathway is amino-acid biosynthesis; L-arginine biosynthesis; L-arginine from L-ornithine and carbamoyl phosphate: step 3/3. The protein is Argininosuccinate lyase 1 of Pseudomonas fluorescens (strain Pf0-1).